The primary structure comprises 367 residues: Glutamate 5-kinase (367 aa).

An ATP-binding site is contributed by Lys9. Substrate-binding residues include Ser49, Asp136, and Asn148. ATP contacts are provided by residues 168 to 169 (TD) and 210 to 216 (TGGMKSK). The 75-residue stretch at 276–350 (SGQIEVDAGA…GMQSQDIQVR (75 aa)) folds into the PUA domain.

This sequence belongs to the glutamate 5-kinase family.

It localises to the cytoplasm. It carries out the reaction L-glutamate + ATP = L-glutamyl 5-phosphate + ADP. Its pathway is amino-acid biosynthesis; L-proline biosynthesis; L-glutamate 5-semialdehyde from L-glutamate: step 1/2. In terms of biological role, catalyzes the transfer of a phosphate group to glutamate to form L-glutamate 5-phosphate. The chain is Glutamate 5-kinase from Bacillus cereus (strain ATCC 14579 / DSM 31 / CCUG 7414 / JCM 2152 / NBRC 15305 / NCIMB 9373 / NCTC 2599 / NRRL B-3711).